The primary structure comprises 384 residues: Urotensin-2 receptor (384 aa).

Topologically, residues 1-54 (MALSPEPSSRFLVPATMGSAMPELPGAPNASLNSSLASPTEPNSLEDLVATGTI) are extracellular. N-linked (GlcNAc...) asparagine glycosylation is found at asparagine 29 and asparagine 33. Residues 55–77 (GVVLSAMGVVGMAGNVYTLTVMC) traverse the membrane as a helical segment. At 78 to 87 (RFLHTSASMY) the chain is on the cytoplasmic side. Residues 88–113 (VYVINLALADLLYLLSIPFIVATYVT) form a helical membrane-spanning segment. Residues 114–124 (KRWHFGDVGCR) lie on the Extracellular side of the membrane. Cysteine 123 and cysteine 199 form a disulfide bridge. The helical transmembrane segment at 125–146 (VLFSLDFLTMHASIFTLTLMSR) threads the bilayer. The Cytoplasmic portion of the chain corresponds to 147–167 (ERYAAVVRPLDTVQRSKGYRK). A helical membrane pass occupies residues 168-186 (VLALGTWLLALLLALPMML). The Extracellular portion of the chain corresponds to 187–209 (AIRLVRRGHKSLCLPAWGQRTHR). The helical transmembrane segment at 210–232 (AYLTLLFGTSIVGPGVVIGLLYV) threads the bilayer. Topologically, residues 233 to 259 (RLARAYWLSQRSSFTQTRRLPNPRVLY) are cytoplasmic. Residues 260–285 (LILGIVLLFWACFLPFWLWQLLAQYR) traverse the membrane as a helical segment. The Extracellular segment spans residues 286–299 (GAPPLAPRSARIVN). A helical transmembrane segment spans residues 300–320 (YLTTCLTYGNSCVNPFLYTLL). At 321–384 (TKNYRDYRQR…SQAVPGSLCV (64 aa)) the chain is on the cytoplasmic side.

This sequence belongs to the G-protein coupled receptor 1 family. In terms of tissue distribution, expressed in neural tissue, including sensory epithelia.

Its subcellular location is the cell membrane. In terms of biological role, high affinity receptor for urotensin-2 and urotensin-2B. The activity of this receptor is mediated by a G-protein that activate a phosphatidylinositol-calcium second messenger system. The protein is Urotensin-2 receptor (UTS2R) of Bos taurus (Bovine).